Here is a 483-residue protein sequence, read N- to C-terminus: MEIVNVLLFLIILFLVKDFVKKNKKIHTKSPSGPIAFPILGNVVQIRFWELFKIQEHELIGNYSKKYNGVVRAWIGERLFLFVSNYDVVKYFQKDENFLYRPSLLVPGWRYASSNGLGVMSSSDDEWKRAKSSVSQSLRVHTSKKLMEEKAIEFIDSLEKISNNNEIFYPKGHIQGYACSMLFKYMFNQDLSVESGMSRTIGNAVEHVFGNLSKLTAFDCFEIFSPLYDWFFTRRLKGCDIVRQIISSQNENHLKSIDPSKPRDLMDDLLIEYGLNEITKEDTMQINQICFDIFGPAVGTVTITMNWVILQLCNRPELQEIAYQEIKKAVKDDEYVNLNHKQNAPYIVAFIKETMRLCSNGFGLPRTAKNDQICGDFFIPKDAIIFINYLEISQNEEIFKNAKEFNPTRYLDESLPVPNIHFGVGQRACPGRFVAIDKMFLGISNLLLKYKLKSQNGEKIDDTIHFSVSLKAKDYGIKLEKRI.

Residues 1 to 21 (MEIVNVLLFLIILFLVKDFVK) form a helical membrane-spanning segment. Residue cysteine 429 coordinates heme.

Belongs to the cytochrome P450 family. Heme is required as a cofactor.

The protein localises to the membrane. The protein is Probable cytochrome P450 517A4 (cyp517A4) of Dictyostelium discoideum (Social amoeba).